Reading from the N-terminus, the 174-residue chain is MAIILGIDPGSRLTGYGVVAHQGSKFTYLGSGCIKLADHEFHIRLKMIYQGITQLIEQFSPETFAIEKVFMAHNPDSALKLGQARGAAIVGAAMADLPVFEYSARQIKQAVVGNGGADKTQVQHMVKNILKLPGTPQADAADALAIAICHAHSEQNLIKLAGSASKTVRGRLRK.

Residues Asp-8, Glu-67, and Asp-139 contribute to the active site. Asp-8, Glu-67, and Asp-139 together coordinate Mg(2+).

It belongs to the RuvC family. Homodimer which binds Holliday junction (HJ) DNA. The HJ becomes 2-fold symmetrical on binding to RuvC with unstacked arms; it has a different conformation from HJ DNA in complex with RuvA. In the full resolvosome a probable DNA-RuvA(4)-RuvB(12)-RuvC(2) complex forms which resolves the HJ. Mg(2+) serves as cofactor.

The protein resides in the cytoplasm. The enzyme catalyses Endonucleolytic cleavage at a junction such as a reciprocal single-stranded crossover between two homologous DNA duplexes (Holliday junction).. Its function is as follows. The RuvA-RuvB-RuvC complex processes Holliday junction (HJ) DNA during genetic recombination and DNA repair. Endonuclease that resolves HJ intermediates. Cleaves cruciform DNA by making single-stranded nicks across the HJ at symmetrical positions within the homologous arms, yielding a 5'-phosphate and a 3'-hydroxyl group; requires a central core of homology in the junction. The consensus cleavage sequence is 5'-(A/T)TT(C/G)-3'. Cleavage occurs on the 3'-side of the TT dinucleotide at the point of strand exchange. HJ branch migration catalyzed by RuvA-RuvB allows RuvC to scan DNA until it finds its consensus sequence, where it cleaves and resolves the cruciform DNA. In Pseudoalteromonas translucida (strain TAC 125), this protein is Crossover junction endodeoxyribonuclease RuvC.